Reading from the N-terminus, the 143-residue chain is Small ribosomal subunit protein bS6 (143 aa).

A disordered region spans residues 100 to 143; sequence SPIIKMKDERREVVELTTSGSEDNQKDHHKEDLDKKTDEFSEEN. Composition is skewed to basic and acidic residues over residues 104–113 and 122–143; these read KMKDERREVV and DNQK…SEEN.

It belongs to the bacterial ribosomal protein bS6 family.

Functionally, binds together with bS18 to 16S ribosomal RNA. The protein is Small ribosomal subunit protein bS6 of Hamiltonella defensa subsp. Acyrthosiphon pisum (strain 5AT).